A 175-amino-acid polypeptide reads, in one-letter code: DELTA-stichotoxin-She4b (175 aa).

Residues 1–10 (ALAGTIIAGA) are plays an important role in the hemolytic activity. An N-terminal region region spans residues 9–28 (GASLTFQVLDKVLEELGKVS). Ser-52, Val-85, Ser-103, Pro-105, Tyr-131, Tyr-135, and Tyr-136 together coordinate phosphocholine. A trp-rich region, which is important for the binding to lipid membrane region spans residues 103–118 (SVPFDYNWYSNWWDVK). The short motif at 141–143 (RGD) is the Cell attachment site, crucial for protein stability element.

Octamer or nonamer in membranes. Monomer in the soluble state. Originally described as forming tetramer in the presence of a lipidic interface. As to expression, expressed in tentacles and mesenteric filaments.

The protein resides in the secreted. It is found in the nematocyst. It localises to the target cell membrane. In terms of biological role, pore-forming protein that forms cations-selective hydrophilic pores of around 1 nm and causes cardiac stimulation and cytolysis. Pore formation is a multi-step process that involves specific recognition of membrane sphingomyelin (but neither cholesterol nor phosphatidylcholine) using aromatic rich region and adjacent phosphocholine (POC) binding site, firm binding to the membrane (mainly driven by hydrophobic interactions) accompanied by the transfer of the N-terminal region to the lipid-water interface and finally pore formation after oligomerization of monomers. Cytolytic effects include red blood cells hemolysis, platelet aggregation and lysis, cytotoxic and cytostatic effects on fibroblasts. Lethality in mammals has been ascribed to severe vasospasm of coronary vessels, cardiac arrhythmia, and inotropic effects. The sequence is that of DELTA-stichotoxin-She4b from Stichodactyla helianthus (Sun anemone).